The following is a 276-amino-acid chain: Dermonecrotic toxin LlSicTox-alphaIV1ii (276 aa).

Residue His5 is part of the active site. Mg(2+)-binding residues include Glu25 and Asp27. His41 acts as the Nucleophile in catalysis. 2 disulfide bridges follow: Cys45-Cys51 and Cys47-Cys193. Asp85 contacts Mg(2+).

Belongs to the arthropod phospholipase D family. Class II subfamily. Mg(2+) serves as cofactor. As to expression, expressed by the venom gland.

The protein localises to the secreted. It carries out the reaction an N-(acyl)-sphingosylphosphocholine = an N-(acyl)-sphingosyl-1,3-cyclic phosphate + choline. The enzyme catalyses an N-(acyl)-sphingosylphosphoethanolamine = an N-(acyl)-sphingosyl-1,3-cyclic phosphate + ethanolamine. The catalysed reaction is a 1-acyl-sn-glycero-3-phosphocholine = a 1-acyl-sn-glycero-2,3-cyclic phosphate + choline. It catalyses the reaction a 1-acyl-sn-glycero-3-phosphoethanolamine = a 1-acyl-sn-glycero-2,3-cyclic phosphate + ethanolamine. In terms of biological role, dermonecrotic toxins cleave the phosphodiester linkage between the phosphate and headgroup of certain phospholipids (sphingolipid and lysolipid substrates), forming an alcohol (often choline) and a cyclic phosphate. This toxin acts on sphingomyelin (SM). It may also act on ceramide phosphoethanolamine (CPE), lysophosphatidylcholine (LPC) and lysophosphatidylethanolamine (LPE), but not on lysophosphatidylserine (LPS), and lysophosphatidylglycerol (LPG). It acts by transphosphatidylation, releasing exclusively cyclic phosphate products as second products. Induces dermonecrosis, hemolysis, increased vascular permeability, edema, inflammatory response, and platelet aggregation. This is Dermonecrotic toxin LlSicTox-alphaIV1ii from Loxosceles laeta (South American recluse spider).